Here is a 703-residue protein sequence, read N- to C-terminus: Capsid protein VP1 (703 aa).

It belongs to the caliciviridae capsid protein family. Homodimer. Homomultimer. Interacts with the minor capsid protein VP2. May bind to VP3 and Vpg proteins. Post-translationally, cleaved by the viral protease to produce mature capsid protein.

Its subcellular location is the virion. It is found in the host cytoplasm. Capsid protein self assembles to form an icosahedral capsid with a T=3 symmetry, about 38 nm in diameter, and consisting of 180 capsid proteins. A smaller form of capsid with a diameter of 23 nm might be capsid proteins assembled as icosahedron with T=1 symmetry. The capsid encapsulates the genomic RNA and is decorated with VP2 proteins. This is Capsid protein VP1 from San Miguel sea lion virus serotype 4 (SMSV-4).